The following is a 1394-amino-acid chain: Ninein-like protein (1394 aa).

EF-hand domains follow at residues 8–43 (HYVSRLRDVYSSCDTTGTGFLDQEELTQLCTKLGLE) and 42–77 (LEEQLPALLHILLGDDRLARVNFEEFKEGFVAVLSS). Disordered regions lie at residues 77–99 (SGSGVEPSDEEGSSSESATSCAV) and 126–166 (KYGS…KEPQ). The residue at position 149 (Ser-149) is a Phosphoserine. Residues 151-166 (ESLKSDEDAESAKEPQ) are compositionally biased toward basic and acidic residues. 2 EF-hand domains span residues 197–232 (TPENLVQGIWHELGIGSSGHLNEQELAVVCRSIGLH) and 234–269 (LEKQELEELFSKLDQDGDGRVSLAEFQLGLFGHEPP). Residues Asp-247, Asp-249, Asp-251, Arg-253, and Glu-258 each coordinate Ca(2+). 3 coiled-coil regions span residues 382–423 (RQEL…MDDC), 461–515 (WEQA…DSEK), and 544–584 (EQFT…SRQS). The KEN box signature appears at 494–496 (KEN). The interval 578-602 (LPRSRQSPAGTPGTHRRRIPGRGPA) is disordered. The D-box motif lies at 632 to 640 (RMQLETKVN). Residues 835 to 863 (EKEKLEQTYREQVEGLVQEADVLRALLKN) adopt a coiled-coil conformation. Positions 866-893 (TVVSDQQERTPSSMSLGPDSRQQPTARQ) are enriched in polar residues. Residues 866–977 (TVVSDQQERT…SARTLTGQGQ (112 aa)) are disordered. Residues 939-951 (RSSENLGVRDNHQ) show a composition bias toward basic and acidic residues. Coiled-coil stretches lie at residues 1057-1229 (SESE…ELTE) and 1269-1331 (GARV…LRKQ).

As to quaternary structure, interacts with gamma-tubulin and TUBGCP4. Interacts with anaphase promoting complex/cyclosome (APC/C). Interacts with CDC20 and FZR1. Interacts with LCA5 and USH2A. Phosphorylated by PLK1 which disrupts its centrosome association and interaction with gamma-tubulin. Post-translationally, ubiquitinated by the APC/C complex leading to its degradation.

The protein resides in the cytoplasm. It localises to the cytoskeleton. It is found in the microtubule organizing center. The protein localises to the centrosome. In terms of biological role, involved in the microtubule organization in interphase cells. Overexpression induces the fragmentation of the Golgi, and causes lysosomes to disperse toward the cell periphery; it also interferes with mitotic spindle assembly. Involved in vesicle transport in photoreceptor cells. The sequence is that of Ninein-like protein (Ninl) from Mus musculus (Mouse).